Consider the following 160-residue polypeptide: Cytochrome b6-f complex subunit 4 (160 aa).

A run of 4 helical transmembrane segments spans residues 36–56, 68–88, 95–115, and 131–151; these read LLYI…GLAV, PFAT…FQIL, FFGV…PFLE, and SVFL…VLPI.

Belongs to the cytochrome b family. PetD subfamily. The 4 large subunits of the cytochrome b6-f complex are cytochrome b6, subunit IV (17 kDa polypeptide, petD), cytochrome f and the Rieske protein, while the 4 small subunits are petG, petL, petM and petN. The complex functions as a dimer.

It is found in the plastid. It localises to the chloroplast thylakoid membrane. Component of the cytochrome b6-f complex, which mediates electron transfer between photosystem II (PSII) and photosystem I (PSI), cyclic electron flow around PSI, and state transitions. This chain is Cytochrome b6-f complex subunit 4, found in Welwitschia mirabilis (Tree tumbo).